A 421-amino-acid polypeptide reads, in one-letter code: Testin (421 aa).

Residues 92–199 enclose the PET domain; it reads MILTNPVAAK…GDVKLPCEMD (108 aa). Positions 133 to 164 are disordered; sequence EKQPVAGSEGAQYRKKQLAKQLPAHDQDPSKC. Basic and acidic residues predominate over residues 155-164; the sequence is PAHDQDPSKC. 3 consecutive LIM zinc-binding domains span residues 234–297, 299–359, and 362–421; these read YSCY…CDSE, PRCA…NHAV, and QGCH…KMMS.

The protein belongs to the prickle / espinas / testin family. As to quaternary structure, interacts via LIM domain 1 with ZYX. Interacts (via LIM domain 3) with ENAH and VASP. Interacts with ALKBH4, talin, actin, alpha-actinin, GRIP1 and PXN. Interacts (via LIM domain 2) with ACTL7A (via N-terminus). Heterodimer with ACTL7A; the heterodimer interacts with ENAH to form a heterotrimer.

It is found in the cytoplasm. Its subcellular location is the cell junction. The protein resides in the focal adhesion. Functionally, scaffold protein that may play a role in cell adhesion, cell spreading and in the reorganization of the actin cytoskeleton. Plays a role in the regulation of cell proliferation. May act as a tumor suppressor. The polypeptide is Testin (TES) (Ateles geoffroyi (Black-handed spider monkey)).